Reading from the N-terminus, the 293-residue chain is NAD kinase (293 aa).

Catalysis depends on Asp73, which acts as the Proton acceptor. Residues Asp73–Gly74, Asn147–Glu148, His158, Arg175, Asp177, Thr188–Ser193, and Gln248 contribute to the NAD(+) site.

This sequence belongs to the NAD kinase family. It depends on a divalent metal cation as a cofactor.

It is found in the cytoplasm. The catalysed reaction is NAD(+) + ATP = ADP + NADP(+) + H(+). In terms of biological role, involved in the regulation of the intracellular balance of NAD and NADP, and is a key enzyme in the biosynthesis of NADP. Catalyzes specifically the phosphorylation on 2'-hydroxyl of the adenosine moiety of NAD to yield NADP. This is NAD kinase from Photobacterium profundum (strain SS9).